The chain runs to 395 residues: Putative nickel insertion protein (395 aa).

Belongs to the LarC family.

The polypeptide is Putative nickel insertion protein (Methanopyrus kandleri (strain AV19 / DSM 6324 / JCM 9639 / NBRC 100938)).